The following is a 279-amino-acid chain: MIRVASPAKINLFLHITGRRNDGYHELQSIFQLIDLYDWMTFTPRTEAEDNLSITGIEQVDLEQNLIFRAAQLLKLYAKKYCGLNIQIEKQIPMGAGLGGGSSNAATTLLVLNQLWDCGLNLDQLAALGVKLGADVPIFIYGKNAWAEGIGEKLTFVDLDQKQYIILKPDCFISTQLLFSQKTLTRDSNRTTFCAYQLKPSDFGNNFEALARSLYPEVEEAMQYLDQFGQAKLTGTGACVFTEVTPEMNVSEIVQHAPCKSYVVHSLNKSPLSHFMTDI.

Residue lysine 9 is part of the active site. 93-103 lines the ATP pocket; the sequence is PMGAGLGGGSS. Aspartate 135 is an active-site residue.

The protein belongs to the GHMP kinase family. IspE subfamily.

It catalyses the reaction 4-CDP-2-C-methyl-D-erythritol + ATP = 4-CDP-2-C-methyl-D-erythritol 2-phosphate + ADP + H(+). It functions in the pathway isoprenoid biosynthesis; isopentenyl diphosphate biosynthesis via DXP pathway; isopentenyl diphosphate from 1-deoxy-D-xylulose 5-phosphate: step 3/6. Its function is as follows. Catalyzes the phosphorylation of the position 2 hydroxy group of 4-diphosphocytidyl-2C-methyl-D-erythritol. In Acinetobacter baylyi (strain ATCC 33305 / BD413 / ADP1), this protein is 4-diphosphocytidyl-2-C-methyl-D-erythritol kinase.